A 138-amino-acid polypeptide reads, in one-letter code: MIKPIPRISSRRNGRIGSRKTGRRIPKGIIHVQASFNNTIVTVTDVRGRVVSWSSAGTSGFKGAKRGTPFAAQSAAVNAIRTVVDQGMQRAEVMIKGPGPGRDAALRAIRRSGILLSFVRDITPMPHNGCRPPKKRRV.

The segment at Met-1–Arg-24 is disordered. Basic residues predominate over residues Ser-9–Arg-24.

The protein belongs to the universal ribosomal protein uS11 family. In terms of assembly, part of the 30S ribosomal subunit.

The protein localises to the plastid. The protein resides in the chloroplast. In Lemna minor (Common duckweed), this protein is Small ribosomal subunit protein uS11c.